Reading from the N-terminus, the 129-residue chain is MKYFVVALALVAAFACIAESKPAESEHELAEVEEENELADLEDAVWLEHLADLSDLEEARGFFGNTWKKIKGKADKIMLKKAVKIMVKKEGIFKEEAQAKVDAMSKKQIRLYLLKYYGKKALQKASEKL.

The signal sequence occupies residues 1 to 20; sequence MKYFVVALALVAAFACIAES. Positions 21–60 are excised as a propeptide; sequence KPAESEHELAEVEEENELADLEDAVWLEHLADLSDLEEAR.

Belongs to the cationic peptide 06 (cytoinsectotoxin) family. As to expression, expressed by the venom gland.

The protein resides in the secreted. In terms of biological role, insecticidal, cytolytic and antimicrobial peptide. Forms voltage-dependent, ion-permeable channels in membranes. At high concentration causes cell membrane lysis. This Lachesana tarabaevi (Spider) protein is M-zodatoxin-Lt8i (cit 1-6).